Consider the following 101-residue polypeptide: Interleukin-8 (101 aa).

The N-terminal stretch at 1–22 is a signal peptide; that stretch reads MTSKLAIALLAAFLLSAALCKA. At Arg-27 the chain carries Citrulline. 2 disulfide bridges follow: Cys-34–Cys-61 and Cys-36–Cys-77.

The protein belongs to the intercrine alpha (chemokine CxC) family. In terms of assembly, homodimer. Citrullination at Arg-27 prevents proteolysis, and dampens tissue inflammation, it also enhances leukocytosis, possibly through impaired chemokine clearance from the blood circulation.

The protein localises to the secreted. In terms of biological role, chemotactic factor that mediates inflammatory response by attracting neutrophils, basophils, and T-cells to clear pathogens and protect the host from infection. Also plays an important role in neutrophil activation. Released in response to an inflammatory stimulus, exerts its effect by binding to the G-protein-coupled receptors CXCR1 and CXCR2, primarily found in neutrophils, monocytes and endothelial cells. G-protein heterotrimer (alpha, beta, gamma subunits) constitutively binds to CXCR1/CXCR2 receptor and activation by IL8 leads to beta and gamma subunits release from Galpha (GNAI2 in neutrophils) and activation of several downstream signaling pathways including PI3K and MAPK pathways. The protein is Interleukin-8 (CXCL8) of Tursiops truncatus (Atlantic bottle-nosed dolphin).